Here is a 224-residue protein sequence, read N- to C-terminus: Glutathione S-transferase D7 (224 aa).

Positions 2 to 83 (PNLDLYNFPM…YLVEKYGKPD (82 aa)) constitute a GST N-terminal domain. Glutathione contacts are provided by residues 53–55 (HTI) and 67–69 (ESR). The 121-residue stretch at 90 to 210 (DPQKRALINQ…LESLQQGKKF (121 aa)) folds into the GST C-terminal domain.

The protein belongs to the GST superfamily. Delta family. As to quaternary structure, homodimer.

It catalyses the reaction RX + glutathione = an S-substituted glutathione + a halide anion + H(+). In terms of biological role, conjugation of reduced glutathione to a wide number of exogenous and endogenous hydrophobic electrophiles. May be involved in detoxification. This is Glutathione S-transferase D7 from Drosophila melanogaster (Fruit fly).